The primary structure comprises 526 residues: CTP synthase (526 aa).

The tract at residues 1-264 (MPQRFIVVTG…HKLIAKELDI (264 aa)) is amidoligase domain. Ser-14 contacts CTP. A UTP-binding site is contributed by Ser-14. ATP is bound by residues 15 to 20 (GIGKGI) and Asp-72. Residues Asp-72 and Glu-138 each contribute to the Mg(2+) site. CTP-binding positions include 145–147 (DIE), 185–190 (KTKPTQ), and Lys-221. UTP-binding positions include 185 to 190 (KTKPTQ) and Lys-221. The Glutamine amidotransferase type-1 domain maps to 282–526 (KIGIVGKYLG…VKAAGGKIND (245 aa)). L-glutamine is bound at residue Gly-342. Catalysis depends on Cys-369, which acts as the Nucleophile; for glutamine hydrolysis. L-glutamine-binding positions include 370–373 (LGMQ), Glu-393, and Arg-451. Residues His-499 and Glu-501 contribute to the active site.

The protein belongs to the CTP synthase family. As to quaternary structure, homotetramer.

The catalysed reaction is UTP + L-glutamine + ATP + H2O = CTP + L-glutamate + ADP + phosphate + 2 H(+). The enzyme catalyses L-glutamine + H2O = L-glutamate + NH4(+). It catalyses the reaction UTP + NH4(+) + ATP = CTP + ADP + phosphate + 2 H(+). Its pathway is pyrimidine metabolism; CTP biosynthesis via de novo pathway; CTP from UDP: step 2/2. Allosterically activated by GTP, when glutamine is the substrate; GTP has no effect on the reaction when ammonia is the substrate. The allosteric effector GTP functions by stabilizing the protein conformation that binds the tetrahedral intermediate(s) formed during glutamine hydrolysis. Inhibited by the product CTP, via allosteric rather than competitive inhibition. Functionally, catalyzes the ATP-dependent amination of UTP to CTP with either L-glutamine or ammonia as the source of nitrogen. Regulates intracellular CTP levels through interactions with the four ribonucleotide triphosphates. This chain is CTP synthase, found in Thermosipho africanus (strain TCF52B).